Consider the following 138-residue polypeptide: Phospholipase A2 crotoxin basic chain CBa2 (138 aa).

Residues 1-16 (MRALWIVAVLLVGVEG) form the signal peptide. 7 cysteine pairs are disulfide-bonded: cysteine 42–cysteine 131, cysteine 44–cysteine 60, cysteine 59–cysteine 111, cysteine 65–cysteine 138, cysteine 66–cysteine 104, cysteine 73–cysteine 97, and cysteine 91–cysteine 102. Residues tyrosine 43, glycine 45, and glycine 47 each coordinate Ca(2+). Histidine 63 is a catalytic residue. Position 64 (aspartate 64) interacts with Ca(2+). Aspartate 105 is a catalytic residue.

It belongs to the phospholipase A2 family. Group II subfamily. D49 sub-subfamily. As to quaternary structure, heterodimer of one of the acidic (CA1, CA2, CA3 or CA4) and one of the basic (CBa1, CBa2, CBb, CBc or CBd) subunits; non-covalently linked. The acidic subunit is non-toxic, without enzymatic activity and comprises 3 peptides that are cross-linked by 5 disulfide bridges. The basic subunit is toxic, has phospholipase A2 activity and is composed of a single chain. Multiple variants of each subunit give different crotoxin complexes that can be subdivided into 2 classes: (1) those of high toxicity, low PLA2 activity (CBb, CBc and CBd linked with high affinity to any CA) and high stability (K(d)=4.5 nM) and (2) those of moderate toxicity, high PLA2 activity (CBa2 linked with low affinity to any CA) and low stability (K(d)=25 nM). Interacts with human NBD1 domain of CFTR. It depends on Ca(2+) as a cofactor. As to expression, expressed by the venom gland.

It is found in the secreted. The catalysed reaction is a 1,2-diacyl-sn-glycero-3-phosphocholine + H2O = a 1-acyl-sn-glycero-3-phosphocholine + a fatty acid + H(+). Heterodimer CA-CB: Crotoxin is a potent presynaptic neurotoxin that possesses phospholipase A2 (PLA2) activity and exerts a lethal action by blocking neuromuscular transmission. It consists of a non-covalent association of a basic and weakly toxic PLA2 subunit (CBa2, CBb, CBc, or CBd), with a small acidic, non-enzymatic and non-toxic subunit (CA1, CA2, CA3 or CA4). The complex acts by binding to a specific 48-kDa protein (R48) receptor located on presynaptic membranes, forming a transient ternary complex CA-CB-R48, followed by dissociation of the CA-CB complex and release of the CA subunit. At equilibrium, only the CB subunits remain associated with the specific crotoxin receptor. In addition to neurotoxicity, crotoxin has been found to exert myotoxicity, nephrotoxicity, and cardiovascular toxicity. Moreover, anti-inflammatory, immunomodulatory, anti-tumor and analgesic effects of crotoxin have also been reported. In terms of biological role, monomer CBa2: The basic subunit of crotoxin is a snake venom phospholipase A2 (PLA2) that exhibits weak neurotoxicity (10-fold less than the heterodimer) and strong anticoagulant effects by binding to factor Xa (F10) and inhibiting the prothrombinase activity (IC(50) is 41 nM). In addition, it shows the same effects described for the heterodimer and binds the nucleotide-binding domain (NBD1) of CFTR chloride channels and increases the channel current. PLA2 catalyzes the calcium-dependent hydrolysis of the 2-acyl groups in 3-sn-phosphoglycerides. In Crotalus durissus terrificus (South American rattlesnake), this protein is Phospholipase A2 crotoxin basic chain CBa2.